The primary structure comprises 86 residues: Large ribosomal subunit protein bL27 (86 aa).

Over residues 1-10 the composition is skewed to gly residues; the sequence is MAQKKGGGST. The segment at 1–21 is disordered; it reads MAQKKGGGSTRNGRDSESKRL.

This sequence belongs to the bacterial ribosomal protein bL27 family.

The sequence is that of Large ribosomal subunit protein bL27 from Bordetella petrii (strain ATCC BAA-461 / DSM 12804 / CCUG 43448).